Consider the following 259-residue polypeptide: Hemin import ATP-binding protein HmuV (259 aa).

The ABC transporter domain maps to 8–242 (ISANNISYRI…KMIENVYGHK (235 aa)). 40–47 (GPNGAGKS) provides a ligand contact to ATP.

It belongs to the ABC transporter superfamily. Heme (hemin) importer (TC 3.A.1.14.5) family. In terms of assembly, the complex is composed of two ATP-binding proteins (HmuV), two transmembrane proteins (HmuU) and a solute-binding protein (HmuT).

It is found in the cell inner membrane. Its function is as follows. Part of the ABC transporter complex HmuTUV involved in hemin import. Responsible for energy coupling to the transport system. This Aliivibrio fischeri (strain ATCC 700601 / ES114) (Vibrio fischeri) protein is Hemin import ATP-binding protein HmuV.